Consider the following 527-residue polypeptide: Acid-sensing ion channel 1 (527 aa).

The Cytoplasmic segment spans residues 1–49 (MMDLKVDEEEVDSGQPVSIQAFASSSTLHGISHIFSYERLSLKRVVWAL). The helical transmembrane segment at 50–71 (CFMGSLALLALVCTNRIQYYFL) threads the bilayer. Topologically, residues 72-424 (YPHVTKLDEV…NYETIEQKKA (353 aa)) are extracellular. Intrachain disulfides connect cysteine 94-cysteine 195, cysteine 173-cysteine 180, cysteine 291-cysteine 366, cysteine 309-cysteine 362, cysteine 313-cysteine 360, cysteine 322-cysteine 344, and cysteine 324-cysteine 336. Asparagine 367 and asparagine 394 each carry an N-linked (GlcNAc...) asparagine glycan. Residues 425–454 (YEVAGLLGDIGGQMGLFIGASILTVLELFD) traverse the membrane as a discontinuously helical segment. The GAS motif; ion selectivity filter motif lies at 443 to 445 (GAS). Over 455–527 (YAYEVIKHRL…ARGTFEDFTC (73 aa)) the chain is Cytoplasmic.

Belongs to the amiloride-sensitive sodium channel (TC 1.A.6) family. ASIC1 subfamily. In terms of assembly, homotrimer. Heterotrimer; with other ASIC proteins producing channel with different properties.

Its subcellular location is the cell membrane. The protein localises to the postsynaptic cell membrane. It localises to the cell projection. The protein resides in the dendrite. It catalyses the reaction Na(+)(in) = Na(+)(out). The enzyme catalyses Li(+)(in) = Li(+)(out). It carries out the reaction K(+)(in) = K(+)(out). The catalysed reaction is Ca(2+)(in) = Ca(2+)(out). Inhibited by the diuretic drug amiloride. Inhibited by Cs(1+) ions. Inhibited by the spider venom psalmotoxin-1; this locks the channel into its desensitized conformation. Channel activity is increased by the heterodimeric snake venom neurotoxin composed of MitTx-alpha and MitTx-beta; this slows channel closure and increases the magnitude of the steady-state current that is triggered by low pH. In terms of biological role, forms voltage-independent, pH-gated trimeric sodium channels that act as postsynaptic excitatory receptors in the nervous system, playing a crucial role in regulating synaptic plasticity, learning, and memory. Upon extracellular pH drop this channel elicits transient, fast activating, and completely desensitizing inward currents. Displays high selectivity for sodium ions but can also permit the permeation of other cations. Regulates more or less directly intracellular calcium concentration and CaMKII phosphorylation, and thereby the density of dendritic spines. Modulates neuronal activity in the circuits underlying innate fear. This chain is Acid-sensing ion channel 1, found in Gallus gallus (Chicken).